Consider the following 406-residue polypeptide: Arginine deiminase (406 aa).

C396 (amidino-cysteine intermediate) is an active-site residue.

The protein belongs to the arginine deiminase family.

The protein localises to the cytoplasm. It catalyses the reaction L-arginine + H2O = L-citrulline + NH4(+). It functions in the pathway amino-acid degradation; L-arginine degradation via ADI pathway; carbamoyl phosphate from L-arginine: step 1/2. This Aliivibrio fischeri (strain ATCC 700601 / ES114) (Vibrio fischeri) protein is Arginine deiminase.